A 142-amino-acid polypeptide reads, in one-letter code: Large ribosomal subunit protein uL13 (142 aa).

The protein belongs to the universal ribosomal protein uL13 family. As to quaternary structure, part of the 50S ribosomal subunit.

Its function is as follows. This protein is one of the early assembly proteins of the 50S ribosomal subunit, although it is not seen to bind rRNA by itself. It is important during the early stages of 50S assembly. The polypeptide is Large ribosomal subunit protein uL13 (Haemophilus influenzae (strain 86-028NP)).